A 119-amino-acid polypeptide reads, in one-letter code: Beta-2-microglobulin (119 aa).

Residues 1 to 20 (MAPFVAIALLVLLSLSGLEA) form the signal peptide. The 90-residue stretch at 25–114 (PKIQVYSRHP…VTFSTPKTVK (90 aa)) folds into the Ig-like C1-type domain. Cys45 and Cys100 are joined by a disulfide.

The protein belongs to the beta-2-microglobulin family. In terms of assembly, heterodimer of an alpha chain and a beta chain. Beta-2-microglobulin is the beta-chain of major histocompatibility complex class I molecules.

It is found in the secreted. In terms of biological role, component of the class I major histocompatibility complex (MHC). Involved in the presentation of peptide antigens to the immune system. This Cheracebus torquatus (Collared titi monkey) protein is Beta-2-microglobulin (B2M).